Reading from the N-terminus, the 194-residue chain is Lectin-C (194 aa).

A signal peptide spans 1–26; sequence MKRSNSIAVMLVLVLSSLMLLLPVEG. Positions 27–44 are cleaved as a propeptide — removed in mature form; it reads QGHEGHGVGEILLMGKLG. Chitin-binding type-1 domains are found at residues 45 to 86, 87 to 127, and 128 to 168; these read APVC…QCDY, NRCG…QCSY, and WRCG…QCDL. 12 cysteine pairs are disulfide-bonded: Cys48–Cys63, Cys57–Cys69, Cys62–Cys76, Cys80–Cys84, Cys89–Cys104, Cys98–Cys110, Cys103–Cys117, Cys121–Cys125, Cys130–Cys145, Cys139–Cys151, Cys144–Cys158, and Cys162–Cys166. Positions 171-194 are cleaved as a propeptide — removed in mature form; sequence LLPSPLRRIIAIRKLKANLANMLS.

Homodimer. The homodimers are asymmetric; formed in a 'head-to-tail' fashion via hydrophobic interactions between aromatic residues of the carbohydrate-binding sites of each subunit.

Its function is as follows. N-acetyl-D-glucosamine binding lectin. Almost no hemagglutinating activity towards human erythrocytes. Low mitogenic activity towards human peripheral blood lymphocytes. The polypeptide is Lectin-C (Phytolacca americana (American pokeweed)).